Here is a 172-residue protein sequence, read N- to C-terminus: Large ribosomal subunit protein uL5 (172 aa).

This sequence belongs to the universal ribosomal protein uL5 family. In terms of assembly, component of the large ribosomal subunit.

It is found in the nucleus. Its subcellular location is the cytoplasm. Component of the ribosome, a large ribonucleoprotein complex responsible for the synthesis of proteins in the cell. The small ribosomal subunit (SSU) binds messenger RNAs (mRNAs) and translates the encoded message by selecting cognate aminoacyl-transfer RNA (tRNA) molecules. The large subunit (LSU) contains the ribosomal catalytic site termed the peptidyl transferase center (PTC), which catalyzes the formation of peptide bonds, thereby polymerizing the amino acids delivered by tRNAs into a polypeptide chain. The nascent polypeptides leave the ribosome through a tunnel in the LSU and interact with protein factors that function in enzymatic processing, targeting, and the membrane insertion of nascent chains at the exit of the ribosomal tunnel. This is Large ribosomal subunit protein uL5 (RPL11) from Tetrahymena thermophila.